A 206-amino-acid chain; its full sequence is 2,3-bisphosphoglycerate-dependent phosphoglycerate mutase (206 aa).

Residues 9–16, 22–23, Arg61, 88–91, Lys99, 115–116, and 159–160 contribute to the substrate site; these read RHGQSEWN, TG, ERDY, RR, and GN. The active-site Tele-phosphohistidine intermediate is His10. The active-site Proton donor/acceptor is the Glu88.

This sequence belongs to the phosphoglycerate mutase family. BPG-dependent PGAM subfamily. Homodimer.

The enzyme catalyses (2R)-2-phosphoglycerate = (2R)-3-phosphoglycerate. The protein operates within carbohydrate degradation; glycolysis; pyruvate from D-glyceraldehyde 3-phosphate: step 3/5. Functionally, catalyzes the interconversion of 2-phosphoglycerate and 3-phosphoglycerate. In Brucella anthropi (strain ATCC 49188 / DSM 6882 / CCUG 24695 / JCM 21032 / LMG 3331 / NBRC 15819 / NCTC 12168 / Alc 37) (Ochrobactrum anthropi), this protein is 2,3-bisphosphoglycerate-dependent phosphoglycerate mutase.